The chain runs to 355 residues: 3-dehydroquinate synthase (355 aa).

Residues Glu71–Lys76, Gly105–Asp109, Thr129–Ser130, Lys142, and Lys151 contribute to the NAD(+) site. Zn(2+) is bound by residues Glu184, His246, and His263.

The protein belongs to the sugar phosphate cyclases superfamily. Dehydroquinate synthase family. Co(2+) is required as a cofactor. It depends on Zn(2+) as a cofactor. Requires NAD(+) as cofactor.

The protein localises to the cytoplasm. It carries out the reaction 7-phospho-2-dehydro-3-deoxy-D-arabino-heptonate = 3-dehydroquinate + phosphate. It functions in the pathway metabolic intermediate biosynthesis; chorismate biosynthesis; chorismate from D-erythrose 4-phosphate and phosphoenolpyruvate: step 2/7. Catalyzes the conversion of 3-deoxy-D-arabino-heptulosonate 7-phosphate (DAHP) to dehydroquinate (DHQ). The chain is 3-dehydroquinate synthase from Streptococcus pneumoniae serotype 19F (strain G54).